The primary structure comprises 347 residues: MNSLVTQYAAPLFERYPQLHDYLPTLERPFFNISLWEHFDDVVTRVTNGRFVPSEFQFIAGELPLSTLPPVLYAITAYYVIIFGGRFLLSKSKPFKLNGLFQLHNLVLTSLSLTLLLLMVEQLVPIIVQHGLYFAICNIGAWTQPLVTLYYMNYIVKFIEFIDTFFLVLKHKKLTFLHTYHHGATALLCYTQLMGTTSISWVPISLNLGVHVVMYWYYFLAARGIRVWWKEWVTRFQIIQFVLDIGFIYFAVYQKAVHLYFPILPHCGDCVGSTTATFAGCAIISSYLVLFISFYINVYKRKGTKTSRVVKRAHGGVAAKVNEYVNVDLKNVPTPSPSPKPQHRRKR.

Residues 1 to 62 (MNSLVTQYAA…PSEFQFIAGE (62 aa)) are Lumenal-facing. Asn32 is a glycosylation site (N-linked (GlcNAc...) asparagine). The helical transmembrane segment at 63–83 (LPLSTLPPVLYAITAYYVIIF) threads the bilayer. The Cytoplasmic segment spans residues 84–96 (GGRFLLSKSKPFK). A helical transmembrane segment spans residues 97–119 (LNGLFQLHNLVLTSLSLTLLLLM). Over 120–122 (VEQ) the chain is Lumenal. The helical transmembrane segment at 123–142 (LVPIIVQHGLYFAICNIGAW) threads the bilayer. The Cytoplasmic segment spans residues 143 to 146 (TQPL). The helical transmembrane segment at 147 to 169 (VTLYYMNYIVKFIEFIDTFFLVL) threads the bilayer. Residues 170 to 200 (KHKKLTFLHTYHHGATALLCYTQLMGTTSIS) are Lumenal-facing. Residues 178-182 (HTYHH) carry the HxxHH motif motif. The helical transmembrane segment at 201–221 (WVPISLNLGVHVVMYWYYFLA) threads the bilayer. Topologically, residues 222-231 (ARGIRVWWKE) are cytoplasmic. The chain crosses the membrane as a helical span at residues 232-254 (WVTRFQIIQFVLDIGFIYFAVYQ). The Lumenal segment spans residues 255–275 (KAVHLYFPILPHCGDCVGSTT). Residues 276 to 296 (ATFAGCAIISSYLVLFISFYI) form a helical membrane-spanning segment. Residues 297-347 (NVYKRKGTKTSRVVKRAHGGVAAKVNEYVNVDLKNVPTPSPSPKPQHRRKR) are Cytoplasmic-facing. Thr334 carries the post-translational modification Phosphothreonine. 2 positions are modified to phosphoserine: Ser336 and Ser338. Residues 344-347 (RRKR) carry the Di-lysine-like motif motif.

This sequence belongs to the ELO family.

The protein resides in the endoplasmic reticulum membrane. The catalysed reaction is a very-long-chain acyl-CoA + malonyl-CoA + H(+) = a very-long-chain 3-oxoacyl-CoA + CO2 + CoA. It catalyses the reaction octadecanoyl-CoA + malonyl-CoA + H(+) = 3-oxoeicosanoyl-CoA + CO2 + CoA. The enzyme catalyses hexadecanoyl-CoA + malonyl-CoA + H(+) = 3-oxooctadecanoyl-CoA + CO2 + CoA. It carries out the reaction eicosanoyl-CoA + malonyl-CoA + H(+) = 3-oxodocosanoyl-CoA + CO2 + CoA. The catalysed reaction is docosanoyl-CoA + malonyl-CoA + H(+) = 3-oxotetracosanoyl-CoA + CO2 + CoA. In terms of biological role, component of a microsomal membrane-bound long-chain fatty acid elongation system, which produces the 20-26-carbon very long-chain fatty acids (VLCFA) from long-chain fatty acid precursors and is involved ceramide and inositol sphingolipid biosynthesis. Component of elongase II, which elongates 16-18 carbon fatty acyl-CoAs such as palmitoyl-CoA and stearoyl-CoA to 20-22-carbon fatty acids by incorporation of malonyl-CoA. Involved in the synthesis of 1,3-beta-glucan. The enzymes active site faces the cytosol, whereas VLCFA length is determined by a lysine near the luminal end of transmembrane helix 6. Plays an important role in lipotoxic cell death induced by oleic acid through maintaining a balanced fatty acid composition in thr plasma membrane. This chain is Fatty acid elongase 2, found in Saccharomyces cerevisiae (strain ATCC 204508 / S288c) (Baker's yeast).